A 219-amino-acid polypeptide reads, in one-letter code: uncharacterized protein (219 aa).

The N-terminal stretch at 1-15 (MYVLFLLSWVLVAGA) is a signal peptide. An N-linked (GlcNAc...) asparagine glycan is attached at asparagine 118. The disordered stretch occupies residues 138–174 (GEVGEDPGKRARKRRLGLPIGEPGEDVGKRMRQRQQG).

Component of the acid-insoluble and acid-soluble organic matrix of calcified layers of the shell (at protein level).

The protein localises to the secreted. This is an uncharacterized protein from Lottia gigantea (Giant owl limpet).